The sequence spans 576 residues: 9-cis-epoxycarotenoid dioxygenase NCED2, chloroplastic (576 aa).

Residues 1–34 (MEVPIAAMTFAHPANVMTLASRQPKSKRSHISPA) constitute a chloroplast transit peptide. 4 residues coordinate Fe cation: His-270, His-319, His-385, and His-563.

Belongs to the carotenoid oxygenase family. It depends on Fe(2+) as a cofactor.

The protein resides in the plastid. It localises to the chloroplast. The catalysed reaction is a 9-cis-epoxycarotenoid + O2 = a 12'-apo-carotenal + 2-cis,4-trans-xanthoxin. It catalyses the reaction 9-cis-violaxanthin + O2 = (3S,5R,6S)-5,6-epoxy-3-hydroxy-5,6-dihydro-12'-apo-beta-caroten-12'-al + 2-cis,4-trans-xanthoxin. The enzyme catalyses 9'-cis-neoxanthin + O2 = (3S,5R,6R)-3,5-dihydroxy-6,7-didehydro-5,6-dihydro-12'-apo-beta-caroten-12'-al + 2-cis,4-trans-xanthoxin. Its function is as follows. Has a 11,12(11',12') 9-cis epoxycarotenoid cleavage activity. Catalyzes the first step of abscisic-acid biosynthesis from carotenoids. The protein is 9-cis-epoxycarotenoid dioxygenase NCED2, chloroplastic of Oryza sativa subsp. japonica (Rice).